An 860-amino-acid polypeptide reads, in one-letter code: Glucans biosynthesis glucosyltransferase H (860 aa).

Helical transmembrane passes span 146–166 (ILLI…KGIL), 200–220 (ILLL…TALM), 519–539 (VFLT…FLVL), 576–596 (LFST…ILIW), 610–630 (TVSM…RMLF), and 686–706 (FLWW…VSVI).

Belongs to the glycosyltransferase 2 family. OpgH subfamily.

The protein resides in the cell inner membrane. It participates in glycan metabolism; osmoregulated periplasmic glucan (OPG) biosynthesis. Its function is as follows. Involved in the biosynthesis of osmoregulated periplasmic glucans (OPGs). The polypeptide is Glucans biosynthesis glucosyltransferase H (Pseudomonas syringae pv. syringae (strain B728a)).